Reading from the N-terminus, the 198-residue chain is Holliday junction resolvase RecU (198 aa).

Residues 1–21 (MVNYPHKLSSQKRQPSLSQPK) form a disordered region. Residues 11 to 21 (QKRQPSLSQPK) show a composition bias toward polar residues. Thr81, Asp83, Glu96, and Gln115 together coordinate Mg(2+).

It belongs to the RecU family. Mg(2+) serves as cofactor.

It is found in the cytoplasm. It catalyses the reaction Endonucleolytic cleavage at a junction such as a reciprocal single-stranded crossover between two homologous DNA duplexes (Holliday junction).. Functionally, endonuclease that resolves Holliday junction intermediates in genetic recombination. Cleaves mobile four-strand junctions by introducing symmetrical nicks in paired strands. Promotes annealing of linear ssDNA with homologous dsDNA. Required for DNA repair, homologous recombination and chromosome segregation. The sequence is that of Holliday junction resolvase RecU from Streptococcus pneumoniae (strain ATCC 700669 / Spain 23F-1).